Reading from the N-terminus, the 310-residue chain is tRNA pseudouridine synthase B (310 aa).

Catalysis depends on D47, which acts as the Nucleophile.

The protein belongs to the pseudouridine synthase TruB family. Type 1 subfamily.

The enzyme catalyses uridine(55) in tRNA = pseudouridine(55) in tRNA. In terms of biological role, responsible for synthesis of pseudouridine from uracil-55 in the psi GC loop of transfer RNAs. The polypeptide is tRNA pseudouridine synthase B (Psychromonas ingrahamii (strain DSM 17664 / CCUG 51855 / 37)).